The primary structure comprises 1205 residues: Caskin-2 (1205 aa).

ANK repeat units lie at residues 48–77 (DGFSALHHAALSGNSELLLLLLEMQASVDI), 81–110 (NGMRPLHYAAWQGQPEPVRLLLRASASVNA), 114–143 (DGQIPLHLAAQYGHYEVSETLLQHQSNPCH), 147–176 (GKKTPLDLACEFGRVKVVQLLLNSHLCVSL), 188–217 (NFTTPLHLAAKNGHLEVIRLLLKLGIEINK), and 220–249 (KMGTALHEAALCGKTEVVKLLIENGVDVNI). One can recognise an SH3 domain in the interval 281–347 (SGILKVRALK…PPSIVEVISK (67 aa)). Polar residues-rich tracts occupy residues 377–388 (SPGSQLGINPDT) and 398–411 (GSESSVRSAGSGQS). Positions 377 to 411 (SPGSQLGINPDTSVAGDRHSVGSESSVRSAGSGQS) are disordered. 2 consecutive SAM domains span residues 468–531 (KDAE…LIVA) and 537–601 (QIPV…LLDL). The span at 666-687 (RRSFSQESISSRSQGSGHSQES) shows a compositional bias: low complexity. Disordered regions lie at residues 666–689 (RRSFSQESISSRSQGSGHSQESAS), 784–964 (RPGR…QRHL), 984–1054 (QIAA…SQEP), and 1132–1155 (SEASSREQTCIPQQSISNSDKGPP). The span at 823-840 (SSMSSAEGQSPEGQSSVK) shows a compositional bias: polar residues. The span at 908–919 (ISSQHSSSESIP) shows a compositional bias: low complexity. The segment covering 942–959 (DATSELSPTQESQLQSAE) has biased composition (polar residues). Residues 1009–1037 (KNEEHDFNLTESDTVKRRPKVKEKEEESP) show a composition bias toward basic and acidic residues. 2 stretches are compositionally biased toward polar residues: residues 1042–1054 (ANNSPSLIPSQEP) and 1137–1155 (REQTCIPQQSISNSDKGPP).

The sequence is that of Caskin-2 (caskin2) from Xenopus laevis (African clawed frog).